Consider the following 162-residue polypeptide: Ribosome maturation factor RimM (162 aa).

Residues 86 to 160 (EGRYYYFALI…SIHVDPIPGL (75 aa)) enclose the PRC barrel domain.

It belongs to the RimM family. Binds ribosomal protein uS19.

The protein resides in the cytoplasm. An accessory protein needed during the final step in the assembly of 30S ribosomal subunit, possibly for assembly of the head region. Essential for efficient processing of 16S rRNA. May be needed both before and after RbfA during the maturation of 16S rRNA. It has affinity for free ribosomal 30S subunits but not for 70S ribosomes. The protein is Ribosome maturation factor RimM of Thermus thermophilus (strain ATCC 27634 / DSM 579 / HB8).